The sequence spans 445 residues: uncharacterized protein (445 aa).

The disordered stretch occupies residues threonine 139–glutamine 160.

This is an uncharacterized protein from Mycoplasma pneumoniae (strain ATCC 29342 / M129 / Subtype 1) (Mycoplasmoides pneumoniae).